The following is a 236-amino-acid chain: CBS domain-containing protein CBSX1, chloroplastic (236 aa).

Residues 1–53 (MDAVLYSVPLSFTPLRASSSPSSPYLLLPRFLSVQPCHKFTFSRSFPSKSRIP) constitute a chloroplast transit peptide. A disordered region spans residues 47–66 (PSKSRIPSASSAAGSTLMTN). At Ser54 the chain carries N-acetylserine. CBS domains lie at 81-142 (MTKK…GRTE) and 175-231 (MTPA…IKRS).

The protein resides in the plastid. Its subcellular location is the chloroplast. The sequence is that of CBS domain-containing protein CBSX1, chloroplastic (CBSX1) from Arabidopsis thaliana (Mouse-ear cress).